The sequence spans 244 residues: Glucosamine-6-phosphate deaminase (244 aa).

The active-site Proton acceptor; for enolization step is the D67. N133 (for ring-opening step) is an active-site residue. The Proton acceptor; for ring-opening step role is filled by H135. E140 (for ring-opening step) is an active-site residue.

It belongs to the glucosamine/galactosamine-6-phosphate isomerase family. NagB subfamily.

It carries out the reaction alpha-D-glucosamine 6-phosphate + H2O = beta-D-fructose 6-phosphate + NH4(+). It participates in amino-sugar metabolism; N-acetylneuraminate degradation; D-fructose 6-phosphate from N-acetylneuraminate: step 5/5. Catalyzes the reversible isomerization-deamination of glucosamine 6-phosphate (GlcN6P) to form fructose 6-phosphate (Fru6P) and ammonium ion. The protein is Glucosamine-6-phosphate deaminase of Mycoplasma mycoides subsp. mycoides SC (strain CCUG 32753 / NCTC 10114 / PG1).